Here is a 68-residue protein sequence, read N- to C-terminus: Probable tautomerase HP_0924 (68 aa).

The active-site Proton acceptor; via imino nitrogen is the proline 2.

The protein belongs to the 4-oxalocrotonate tautomerase family.

This Helicobacter pylori (strain ATCC 700392 / 26695) (Campylobacter pylori) protein is Probable tautomerase HP_0924.